Reading from the N-terminus, the 640-residue chain is SUMO-activating enzyme subunit 2 (640 aa).

ATP-binding positions include 24–29 (GAGGIG), aspartate 48, 56–59 (NLNR), lysine 72, 95–96 (SI), and 117–122 (DNRAAR). Residues cysteine 158 and cysteine 161 each contribute to the Zn(2+) site. Lysine 164 is covalently cross-linked (Glycyl lysine isopeptide (Lys-Gly) (interchain with G-Cter in SUMO1)). The Glycyl thioester intermediate role is filled by cysteine 173. Residue lysine 190 forms a Glycyl lysine isopeptide (Lys-Gly) (interchain with G-Cter in SUMO) linkage. Positions 202–231 (ADQEVSPDRADPEAAWEPTEAEARARASNE) are disordered. Serine 207 carries the post-translational modification Phosphoserine. The span at 222–231 (AEARARASNE) shows a compositional bias: basic and acidic residues. Residue lysine 236 forms a Glycyl lysine isopeptide (Lys-Gly) (interchain with G-Cter in SUMO1); alternate linkage. Glycyl lysine isopeptide (Lys-Gly) (interchain with G-Cter in SUMO2); alternate cross-links involve residues lysine 236 and lysine 257. Residues lysine 257 and lysine 271 each participate in a glycyl lysine isopeptide (Lys-Gly) (interchain with G-Cter in SUMO); alternate cross-link. Lysine 271 carries the N6-acetyllysine; alternate modification. Residue lysine 275 forms a Glycyl lysine isopeptide (Lys-Gly) (interchain with G-Cter in SUMO) linkage. Lysine 371 participates in a covalent cross-link: Glycyl lysine isopeptide (Lys-Gly) (interchain with G-Cter in SUMO2). Residue lysine 420 forms a Glycyl lysine isopeptide (Lys-Gly) (interchain with G-Cter in SUMO1); alternate linkage. Lysine 420 is covalently cross-linked (Glycyl lysine isopeptide (Lys-Gly) (interchain with G-Cter in SUMO2); alternate). Residues cysteine 441 and cysteine 444 each contribute to the Zn(2+) site. Residue serine 507 is modified to Phosphoserine. Lysine 540 participates in a covalent cross-link: Glycyl lysine isopeptide (Lys-Gly) (interchain with G-Cter in SUMO2). Positions 551-563 (PEKVGPKQAEDAA) are enriched in basic and acidic residues. Residues 551 to 640 (PEKVGPKQAE…EELDDVIALD (90 aa)) are disordered. Residues 565–582 (SITNGSDDGAQPSTSTAQ) are compositionally biased toward polar residues. Residues 583-597 (EQDDVLIVDSDEEDS) are compositionally biased toward acidic residues. At serine 592 the chain carries Phosphoserine. Positions 606–630 (EERSRKRKLDEKENLSAKRSRIEQK) are enriched in basic and acidic residues. A Glycyl lysine isopeptide (Lys-Gly) (interchain with G-Cter in SUMO) cross-link involves residue lysine 611. A Glycyl lysine isopeptide (Lys-Gly) (interchain with G-Cter in SUMO); alternate cross-link involves residue lysine 613. Lysine 613 carries the post-translational modification N6-acetyllysine; alternate. Residues lysine 617 and lysine 623 each participate in a glycyl lysine isopeptide (Lys-Gly) (interchain with G-Cter in SUMO) cross-link. Residues 631 to 640 (EELDDVIALD) show a composition bias toward acidic residues.

It belongs to the ubiquitin-activating E1 family. As to quaternary structure, heterodimer of SAE1 and UBA2/SAE2. The heterodimer corresponds to the two domains that are encoded on a single polypeptide chain in ubiquitin-activating enzyme E1. Interacts with UBE2I. In terms of processing, sumoylated with SUMO1 and SUMO2/3 and by UBC9. Sumoylation at Lys-236 inhibits enzymatic activity. Sumoylation at the C-terminal lysine cluster plays an essential role in nuclear trafficking.

The protein localises to the cytoplasm. It localises to the nucleus. The protein operates within protein modification; protein sumoylation. Functionally, the heterodimer acts as an E1 ligase for SUMO1, SUMO2, SUMO3, and probably SUMO4. It mediates ATP-dependent activation of SUMO proteins followed by formation of a thioester bond between a SUMO protein and a conserved active site cysteine residue on UBA2/SAE2. This is SUMO-activating enzyme subunit 2 (UBA2) from Homo sapiens (Human).